Consider the following 129-residue polypeptide: uncharacterized protein (129 aa).

The protein belongs to the asfivirus C129R family.

It is found in the virion. In terms of biological role, plays a role in the inhibition of type I interferon signaling pathway. Mechanistically, specifically interacts with 2',3'-cGAMP and cleaves it via its phosphodiesterase activity. In turn, prevents 2',3'-cGAMP interaction with host ER-resident STING1 leading to inhibition of downstream signaling pathway and type I interferon production. This is an uncharacterized protein from African swine fever virus (isolate Pig/Kenya/KEN-50/1950) (ASFV).